The chain runs to 438 residues: Trigger factor (438 aa).

In terms of domain architecture, PPIase FKBP-type spans 163-249 (EDFVLIDYEG…LKEIRKQILP (87 aa)).

The protein belongs to the FKBP-type PPIase family. Tig subfamily.

It localises to the cytoplasm. The catalysed reaction is [protein]-peptidylproline (omega=180) = [protein]-peptidylproline (omega=0). Involved in protein export. Acts as a chaperone by maintaining the newly synthesized protein in an open conformation. Functions as a peptidyl-prolyl cis-trans isomerase. This Desulfatibacillum aliphaticivorans protein is Trigger factor.